We begin with the raw amino-acid sequence, 467 residues long: Cysteine--tRNA ligase (467 aa).

Cys-30 provides a ligand contact to Zn(2+). Residues 32-42 (PTVYNYIHIGN) carry the 'HIGH' region motif. 3 residues coordinate Zn(2+): Cys-210, His-235, and Glu-239. The short motif at 267–271 (KMSKS) is the 'KMSKS' region element. Lys-270 provides a ligand contact to ATP. Position 271 is a phosphoserine (Ser-271).

This sequence belongs to the class-I aminoacyl-tRNA synthetase family. Monomer. Requires Zn(2+) as cofactor.

It is found in the cytoplasm. The enzyme catalyses tRNA(Cys) + L-cysteine + ATP = L-cysteinyl-tRNA(Cys) + AMP + diphosphate. The chain is Cysteine--tRNA ligase from Geobacillus thermodenitrificans (strain NG80-2).